The chain runs to 465 residues: Putative multidrug resistance protein MdtD (465 aa).

12 helical membrane passes run 12–32, 49–69, 72–92, 138–158, 165–185, 195–215, 219–239, 267–287, 290–310, 329–351, 393–413, and 430–450; these read LWIVAFGFFMQTLDTTIVNTA, SVIVSYVLTVAVMLPASGWLA, IGVKWVFFSAIILFTFGSLMC, FVTLPGQIGPLVGPALGGFLV, WIFLINLPVGVIGALATLLLM, FDISGFIMLAIGMATLTLALD, GLGLSPLAIAGLILCGVIALG, LVGSMSARIGSGMLPFMTPIF, IGLGFSPFHAGLMMIPMIIGS, VLVNATLLLAVVSLSLPLVAIMG, LLSMAMQLSMSIGVSTAGILL, and SAFLYSYLCMAIIIALPALIF.

This sequence belongs to the major facilitator superfamily. TCR/Tet family.

It localises to the cell inner membrane. This is Putative multidrug resistance protein MdtD from Yersinia pseudotuberculosis serotype I (strain IP32953).